The chain runs to 108 residues: UPF0060 membrane protein SAR2425 (108 aa).

4 helical membrane-spanning segments follow: residues 5–25, 31–51, 60–80, and 86–106; these read IFIF…IWLW, SSLV…IATF, VYAA…MVVD, and KYDV…LLPS.

It belongs to the UPF0060 family.

The protein localises to the cell membrane. In Staphylococcus aureus (strain MRSA252), this protein is UPF0060 membrane protein SAR2425.